The following is a 211-amino-acid chain: Transcription factor E (211 aa).

Residues 10–130 form the HTH TFE/IIEalpha-type domain; that stretch reads GNPAIYQYLL…LWLMRMDHMN (121 aa).

Belongs to the TFE family. Monomer. Interaction with RNA polymerase subunits RpoF and RpoE is necessary for Tfe stimulatory transcription activity. Able to interact with Tbp and RNA polymerase in the absence of DNA promoter. Interacts both with the preinitiation and elongation complexes.

Its function is as follows. Transcription factor that plays a role in the activation of archaeal genes transcribed by RNA polymerase. Facilitates transcription initiation by enhancing TATA-box recognition by TATA-box-binding protein (Tbp), and transcription factor B (Tfb) and RNA polymerase recruitment. Not absolutely required for transcription in vitro, but particularly important in cases where Tbp or Tfb function is not optimal. It dynamically alters the nucleic acid-binding properties of RNA polymerases by stabilizing the initiation complex and destabilizing elongation complexes. Seems to translocate with the RNA polymerase following initiation and acts by binding to the non template strand of the transcription bubble in elongation complexes. In Methanocorpusculum labreanum (strain ATCC 43576 / DSM 4855 / Z), this protein is Transcription factor E.